We begin with the raw amino-acid sequence, 2035 residues long: Envoplakin (2035 aa).

Over residues 1 to 27 (MFKGLSKGSQGKGSPKGSPAKGSPKGS) the composition is skewed to low complexity. 2 disordered regions span residues 1–37 (MFKG…AATQ) and 63–84 (KLQQ…QETG). The segment at 1–841 (MFKGLSKGSQ…LEPALAVSAP (841 aa)) is globular 1. A 4 X 4 AA tandem repeats of K-G-S-P region spans residues 12-28 (KGSPKGSPAKGSPKGSP). Over residues 71–84 (GEQNQALQHQQETG) the composition is skewed to polar residues. The Spectrin repeat unit spans residues 229 to 330 (YTHLQGCTKQ…LCICQESQLQ (102 aa)). The disordered stretch occupies residues 400-419 (QEVAPLPQRRNPSKQPLHVD). An SH3 domain is found at 413–470 (KQPLHVDSICDWDSGEVQLLRGERYTLKDNADPYTWLVQGPGGETKSAPAACLCIPAP). The stretch at 842–1664 (KRLRVISLQE…EKERTLRDLH (823 aa)) forms a coiled coil. Residues 842–1674 (KRLRVISLQE…TKVSREELNQ (833 aa)) form a central fibrous rod domain region. A Plectin 1 repeat occupies 1186–1227 (KQKPKVQLQERVSEIFQVLPETEQEIRRLRAQLQETGSKKSG). S1576 bears the Phosphoserine mark. Residues 1607–1631 (KQQKARQLQEEGRLLSQKTESERQK) are compositionally biased toward basic and acidic residues. The segment at 1607–1637 (KQQKARQLQEEGRLLSQKTESERQKAAQRSQ) is disordered. The globular 2 stretch occupies residues 1675 to 2035 (ETQTRETNLS…SPTLPRSCVR (361 aa)). A Plectin 2 repeat occupies 1679-1714 (RETNLSTKICILEPETGNDMSPYEAYKRGVIDRGQY). At S1800 the chain carries Phosphoserine. 5 Plectin repeats span residues 1819 to 1856 (FGLT…PITG), 1857 to 1894 (QKLL…NTST), 1895 to 1932 (QRLL…QESV), 1933 to 1970 (LPHL…EDLG), and 1971 to 2008 (QLLQ…PLSG). S2026 is modified (phosphoserine).

Belongs to the plakin or cytolinker family. In terms of assembly, may form a homodimer or a heterodimer with PPL.

Its subcellular location is the cell junction. The protein resides in the desmosome. It localises to the cornified envelope. The protein localises to the cytoplasm. It is found in the cytoskeleton. Its function is as follows. Component of the cornified envelope of keratinocytes. May link the cornified envelope to desmosomes and intermediate filaments. The chain is Envoplakin (Evpl) from Mus musculus (Mouse).